Reading from the N-terminus, the 108-residue chain is Nucleoid-associated protein Bphyt_1827 (108 aa).

Positions 87-108 (AQEKMGGMTSGLPLPPGFKLPF) are disordered. A compositionally biased stretch (pro residues) spans 99–108 (PLPPGFKLPF).

It belongs to the YbaB/EbfC family. Homodimer.

It is found in the cytoplasm. It localises to the nucleoid. In terms of biological role, binds to DNA and alters its conformation. May be involved in regulation of gene expression, nucleoid organization and DNA protection. The chain is Nucleoid-associated protein Bphyt_1827 from Paraburkholderia phytofirmans (strain DSM 17436 / LMG 22146 / PsJN) (Burkholderia phytofirmans).